Reading from the N-terminus, the 87-residue chain is Small ribosomal subunit protein uS15c (87 aa).

The protein belongs to the universal ribosomal protein uS15 family. In terms of assembly, part of the 30S ribosomal subunit.

Its subcellular location is the plastid. It is found in the chloroplast. The chain is Small ribosomal subunit protein uS15c (rps15) from Amborella trichopoda.